The primary structure comprises 628 residues: Zinc finger protein 555 (628 aa).

The KRAB domain occupies Val-4–Asn-77. A C2H2-type 1; degenerate zinc finger spans residues Tyr-172–His-194. 14 consecutive C2H2-type zinc fingers follow at residues Tyr-200 to His-222, Tyr-228 to His-250, Tyr-256 to His-278, Tyr-284 to His-306, His-312 to His-334, Tyr-340 to His-362, Tyr-368 to His-390, Tyr-396 to His-418, Tyr-424 to His-446, Tyr-452 to His-474, Tyr-480 to His-502, Tyr-508 to His-530, Tyr-536 to His-558, and Tyr-564 to His-586.

Belongs to the krueppel C2H2-type zinc-finger protein family.

Its subcellular location is the nucleus. May be involved in transcriptional regulation. The sequence is that of Zinc finger protein 555 (ZNF555) from Homo sapiens (Human).